A 380-amino-acid polypeptide reads, in one-letter code: Chaperone protein DnaJ (380 aa).

The J domain occupies 5–70 (DFYEVLGVSR…QKRAAYDQYG (66 aa)). The CR-type zinc-finger motif lies at 135–213 (GCEKDIEIPT…CHGDGRVQKT (79 aa)). Zn(2+) is bound by residues C148, C151, C165, C168, C187, C190, C201, and C204. 4 CXXCXGXG motif repeats span residues 148-155 (CEPCDGTG), 165-172 (CSTCHGQG), 187-194 (CPTCHGKG), and 201-208 (CNSCHGDG).

It belongs to the DnaJ family. Homodimer. It depends on Zn(2+) as a cofactor.

The protein resides in the cytoplasm. In terms of biological role, participates actively in the response to hyperosmotic and heat shock by preventing the aggregation of stress-denatured proteins and by disaggregating proteins, also in an autonomous, DnaK-independent fashion. Unfolded proteins bind initially to DnaJ; upon interaction with the DnaJ-bound protein, DnaK hydrolyzes its bound ATP, resulting in the formation of a stable complex. GrpE releases ADP from DnaK; ATP binding to DnaK triggers the release of the substrate protein, thus completing the reaction cycle. Several rounds of ATP-dependent interactions between DnaJ, DnaK and GrpE are required for fully efficient folding. Also involved, together with DnaK and GrpE, in the DNA replication of plasmids through activation of initiation proteins. This Aliivibrio salmonicida (strain LFI1238) (Vibrio salmonicida (strain LFI1238)) protein is Chaperone protein DnaJ.